The chain runs to 147 residues: D-aminoacyl-tRNA deacylase (147 aa).

The short motif at 136-137 (GP) is the Gly-cisPro motif, important for rejection of L-amino acids element.

It belongs to the DTD family. As to quaternary structure, homodimer.

The protein localises to the cytoplasm. It carries out the reaction glycyl-tRNA(Ala) + H2O = tRNA(Ala) + glycine + H(+). The catalysed reaction is a D-aminoacyl-tRNA + H2O = a tRNA + a D-alpha-amino acid + H(+). In terms of biological role, an aminoacyl-tRNA editing enzyme that deacylates mischarged D-aminoacyl-tRNAs. Also deacylates mischarged glycyl-tRNA(Ala), protecting cells against glycine mischarging by AlaRS. Acts via tRNA-based rather than protein-based catalysis; rejects L-amino acids rather than detecting D-amino acids in the active site. By recycling D-aminoacyl-tRNA to D-amino acids and free tRNA molecules, this enzyme counteracts the toxicity associated with the formation of D-aminoacyl-tRNA entities in vivo and helps enforce protein L-homochirality. This Streptococcus dysgalactiae subsp. equisimilis (Streptococcus equisimilis) protein is D-aminoacyl-tRNA deacylase.